We begin with the raw amino-acid sequence, 122 residues long: Small ribosomal subunit protein uS12c (122 aa).

This sequence belongs to the universal ribosomal protein uS12 family. Part of the 30S ribosomal subunit.

It is found in the plastid. The protein localises to the chloroplast. In terms of biological role, with S4 and S5 plays an important role in translational accuracy. Located at the interface of the 30S and 50S subunits. The chain is Small ribosomal subunit protein uS12c (rps12) from Chloranthus spicatus (Chulantree).